A 1548-amino-acid polypeptide reads, in one-letter code: UDP-glucose:glycoprotein glucosyltransferase (1548 aa).

Positions 1–22 are cleaved as a signal peptide; that stretch reads MLRAVALCVSVVLIALYTPTSG. N-linked (GlcNAc...) asparagine glycosylation occurs at Asn-181. Basic and acidic residues predominate over residues 243–253; it reads TEYKSQDDAPK. Residues 243–265 are disordered; the sequence is TEYKSQDDAPKPEAGSTSDEDLA. 2 N-linked (GlcNAc...) asparagine glycosylation sites follow: Asn-266 and Asn-864. A glucosyltransferase region spans residues 1227–1548; it reads SANQAATDED…PSHEPKHGEL (322 aa). Over residues 1512–1523 the composition is skewed to basic and acidic residues; that stretch reads EDHENSHSRDSA. The interval 1512-1548 is disordered; that stretch reads EDHENSHSRDSAVDDSVDDSVEVTTVTPSHEPKHGEL. A Prevents secretion from ER motif is present at residues 1545–1548; sequence HGEL.

This sequence belongs to the glycosyltransferase 8 family. As to quaternary structure, monomer. May interact with CG7484/Sep15. Ca(2+) is required as a cofactor. Requires Mn(2+) as cofactor.

Its subcellular location is the endoplasmic reticulum lumen. The protein resides in the endoplasmic reticulum-Golgi intermediate compartment. The enzyme catalyses N(4)-(alpha-D-Man-(1-&gt;2)-alpha-D-Man-(1-&gt;2)-alpha-D-Man-(1-&gt;3)-[alpha-D-Man-(1-&gt;2)-alpha-D-Man-(1-&gt;3)-[alpha-D-Man-(1-&gt;2)-alpha-D-Man-(1-&gt;6)]-alpha-D-Man-(1-&gt;6)]-beta-D-Man-(1-&gt;4)-beta-D-GlcNAc-(1-&gt;4)-beta-D-GlcNAc)-L-asparaginyl-[protein] (N-glucan mannose isomer 9A1,2,3B1,2,3) + UDP-alpha-D-glucose = N(4)-(alpha-D-Glc-(1-&gt;3)-alpha-D-Man-(1-&gt;2)-alpha-D-Man-(1-&gt;2)-alpha-D-Man-(1-&gt;3)-[alpha-D-Man-(1-&gt;2)-alpha-D-Man-(1-&gt;3)-[alpha-D-Man-(1-&gt;2)-alpha-D-Man-(1-&gt;6)]-alpha-D-Man-(1-&gt;6)]-beta-D-Man-(1-&gt;4)-beta-D-GlcNAc-(1-&gt;4)-beta-D-GlcNAc)-L-asparaginyl-[protein] + UDP + H(+). Its pathway is protein modification; protein glycosylation. Recognizes glycoproteins with minor folding defects. Reglucosylates single N-glycans near the misfolded part of the protein, thus providing quality control for protein folding in the endoplasmic reticulum. Reglucosylated proteins are recognized by calreticulin for recycling to the endoplasmic reticulum and refolding or degradation. This Drosophila melanogaster (Fruit fly) protein is UDP-glucose:glycoprotein glucosyltransferase.